Consider the following 211-residue polypeptide: Guanylate kinase (211 aa).

A Guanylate kinase-like domain is found at 7–185; the sequence is GLLIVVTGPS…AVAELRAIIM (179 aa). Residue 14 to 21 coordinates ATP; sequence GPSAVGKG.

It belongs to the guanylate kinase family.

Its subcellular location is the cytoplasm. It carries out the reaction GMP + ATP = GDP + ADP. Its function is as follows. Essential for recycling GMP and indirectly, cGMP. In Symbiobacterium thermophilum (strain DSM 24528 / JCM 14929 / IAM 14863 / T), this protein is Guanylate kinase.